Here is a 380-residue protein sequence, read N- to C-terminus: Set1 complex component swd3 (380 aa).

7 WD repeats span residues 52-91, 94-133, 136-177, 179-219, 221-262, 291-330, and 335-374; these read GHEKSVTCVSVSPNKRWIATSSSDGTIKIWSALTFRLECT, GHYRGISQVKWATGSKYLASASDDKTIRIWDFEKRCSVRC, GHTN…RMLP, HSEP…KTLV, PINV…RIFD, NDSSYPDDAESFMHDAYLLIPSEDGTIQITDPSTKIIIDD, and SDDPETSLLNVTSLGPFIITSGTDPYVRVWAPSLLLSKHE. Residue Ser379 is modified to Phosphoserine.

In terms of assembly, component of the Set1 complex composed of ash2, sdc1, set1, shg1, spp1, swd1, swd2 and swd3.

It localises to the nucleus. In terms of biological role, the Set1 complex specifically methylates 'Lys-4' of histone H3. The chain is Set1 complex component swd3 from Schizosaccharomyces pombe (strain 972 / ATCC 24843) (Fission yeast).